We begin with the raw amino-acid sequence, 136 residues long: Small integral membrane protein 23 (136 aa).

At 1-31 the chain is on the cytoplasmic side; the sequence is MTIQKTGCRGREAAEVVEQRRRSHHCDDRKQ. Residues 32–52 traverse the membrane as a helical; Signal-anchor for type II membrane protein segment; that stretch reads TLLALLILVLYLGMGISGSSW. At 53 to 136 the chain is on the extracellular side; that stretch reads EVSGQTKDCN…DLRPEDPCFT (84 aa). A coiled-coil region spans residues 92–124; the sequence is LKINLHGFLEKLEKEVRELEQLVRDLEFWLDAL.

The protein localises to the membrane. The sequence is that of Small integral membrane protein 23 (Smim23) from Mus musculus (Mouse).